The following is a 474-amino-acid chain: AAA-ATPase At3g28610 (474 aa).

The first 25 residues, 1–25 (MMGNMFGSSLASLFFLWATIQQIFP), serve as a signal peptide directing secretion. Residue 244–251 (GPPGTGKS) coordinates ATP.

This sequence belongs to the AAA ATPase family. BCS1 subfamily. The cofactor is Mg(2+).

The catalysed reaction is ATP + H2O = ADP + phosphate + H(+). The chain is AAA-ATPase At3g28610 from Arabidopsis thaliana (Mouse-ear cress).